The following is a 657-amino-acid chain: Splicing factor Cactin (657 aa).

Residues 1-15 are compositionally biased toward basic residues; that stretch reads MGKDSKKHKKERRRE. Disordered regions lie at residues 1 to 83, 369 to 406, and 472 to 503; these read MGKD…EDTL, QESE…ISKK, and ADVD…QGAS. 2 coiled-coil regions span residues 23-77 and 352-403; these read SDEE…RKDA and RLQL…DEKI. The segment covering 26 to 60 has biased composition (basic and acidic residues); that stretch reads ERLQKRLAEQRSLKKDEKRRQKEEMKKNESAEEKR. A compositionally biased stretch (basic residues) spans 61–72; it reads ARRMEKKMRKDA. Residues 389 to 401 are compositionally biased toward acidic residues; sequence EEEEEEEEDEDDE. Residues 489-503 are compositionally biased toward low complexity; sequence PSSSAASSGAPQGAS.

It belongs to the CACTIN family. As to expression, expressed in pharynx, intestine, vulva and spermatheca (at protein level).

Its subcellular location is the nucleus. The protein localises to the cytoplasm. Functionally, plays a role in pre-mRNA splicing by facilitating excision of a subset of introns. Plays a role during early embryonic development. Required for the distal tip cell migration at the end of larval development and for gonad morphogenesis. The sequence is that of Splicing factor Cactin (cacn-1) from Caenorhabditis elegans.